Consider the following 299-residue polypeptide: MLESHLIIYFLLAVIQFLLGIFTNGIIVVVNGIDLIKHRKMAPLDLLLSCLAVSRIFLQLFIFYVNVIVIFFIEFIMCSANCAILLFVNELELWLATWLGVFYCAKVASVRHPLFIWLKMRISKLVPWMILGSLLYVSMICVFHSKYAGFMVPHFLRNFFSQNATIQKEDTLAIQIFSFVAEFSVPLLIFLVAVLLLIFSLGRHTRQMRNTVAGSRVPGRGAPISALLSILSFLILYFSHCMIKVFLSSLKFHVRRFIFLFFILVIGIYPSGHSLILILGNPKLKQNAKKFLLHSKCCQ.

The Extracellular portion of the chain corresponds to 1–9; sequence MLESHLIIY. A helical transmembrane segment spans residues 10–30; it reads FLLAVIQFLLGIFTNGIIVVV. The Cytoplasmic segment spans residues 31-55; that stretch reads NGIDLIKHRKMAPLDLLLSCLAVSR. The helical transmembrane segment at 56–76 threads the bilayer; the sequence is IFLQLFIFYVNVIVIFFIEFI. At 77 to 81 the chain is on the extracellular side; it reads MCSAN. Residues 82 to 102 form a helical membrane-spanning segment; sequence CAILLFVNELELWLATWLGVF. The Cytoplasmic portion of the chain corresponds to 103–124; the sequence is YCAKVASVRHPLFIWLKMRISK. Residues 125 to 145 form a helical membrane-spanning segment; the sequence is LVPWMILGSLLYVSMICVFHS. Residues 146–178 are Extracellular-facing; that stretch reads KYAGFMVPHFLRNFFSQNATIQKEDTLAIQIFS. N163 carries N-linked (GlcNAc...) asparagine glycosylation. A helical transmembrane segment spans residues 179–199; that stretch reads FVAEFSVPLLIFLVAVLLLIF. The Cytoplasmic segment spans residues 200 to 222; sequence SLGRHTRQMRNTVAGSRVPGRGA. A helical membrane pass occupies residues 223-243; the sequence is PISALLSILSFLILYFSHCMI. Topologically, residues 244–257 are extracellular; it reads KVFLSSLKFHVRRF. A helical transmembrane segment spans residues 258–278; it reads IFLFFILVIGIYPSGHSLILI. Residues 279-299 are Cytoplasmic-facing; it reads LGNPKLKQNAKKFLLHSKCCQ.

This sequence belongs to the G-protein coupled receptor T2R family.

Its subcellular location is the membrane. Functionally, receptor that may play a role in the perception of bitterness and is gustducin-linked. May play a role in sensing the chemical composition of the gastrointestinal content. The activity of this receptor may stimulate alpha gustducin, mediate PLC-beta-2 activation and lead to the gating of TRPM5. The chain is Taste receptor type 2 member 1 (TAS2R1) from Pan paniscus (Pygmy chimpanzee).